Here is a 646-residue protein sequence, read N- to C-terminus: Lipoteichoic acid synthase (646 aa).

Topologically, residues 1–7 (MSSQKKK) are cytoplasmic. The helical transmembrane segment at 8–28 (ISLFAFFLLTVITITLKTYFS) threads the bilayer. Residues 29 to 43 (YYVDFSLGVKGLVQN) lie on the Extracellular side of the membrane. The helical transmembrane segment at 44–64 (LILLMNPYSLVALVLSVFLFF) threads the bilayer. At 65–68 (KGKK) the chain is on the cytoplasmic side. The helical transmembrane segment at 69-89 (AFWFMFIGGFLLTFLLYANVV) threads the bilayer. Over 90–119 (YFRFFSDFLTFSTLNQVGNVESMGGAVSAS) the chain is Extracellular. A helical transmembrane segment spans residues 120–140 (FKWYDFVYFIDTLVYLFILIF). Residues 141-153 (KTKWLDTKAFSKK) are Cytoplasmic-facing. Residues 154 to 174 (FVPVVMAASVALFFLNLAFAE) traverse the membrane as a helical segment. Residues 175–646 (TDRPELLTRT…ETGPKANSKK (472 aa)) are Extracellular-facing. 2 residues coordinate Mn(2+): glutamate 255 and threonine 300. Residue threonine 300 is part of the active site. Histidine 416 is a binding site for substrate. The Mn(2+) site is built by aspartate 475 and histidine 476. Residues 623–638 (NPDFKKVNPSKYKYET) show a composition bias toward basic and acidic residues. A disordered region spans residues 623–646 (NPDFKKVNPSKYKYETGPKANSKK).

It belongs to the LTA synthase family. Proteolytically cleaved.

Its subcellular location is the cell membrane. It localises to the secreted. It functions in the pathway cell wall biogenesis; lipoteichoic acid biosynthesis. Catalyzes the polymerization of lipoteichoic acid (LTA) polyglycerol phosphate, a reaction that presumably uses phosphatidylglycerol (PG) as substrate. Is required for staphylococcal growth and cell division process. This is Lipoteichoic acid synthase (ltaS) from Staphylococcus aureus (strain USA300).